A 162-amino-acid chain; its full sequence is Probable E3 ubiquitin-protein ligase XERICO (162 aa).

A helical membrane pass occupies residues 12 to 28; the sequence is GMLCVILVNTALSISIV. The RING-type; atypical zinc finger occupies 103-145; that stretch reads CSVCLSKFQGDSEINKLKCGHLFHKTCLEKWIDYWNITCPLCR.

As to quaternary structure, interacts with UBC8 and TULP9. As to expression, ubiquitous. Higher expression in actively growing tissues.

The protein resides in the membrane. It carries out the reaction S-ubiquitinyl-[E2 ubiquitin-conjugating enzyme]-L-cysteine + [acceptor protein]-L-lysine = [E2 ubiquitin-conjugating enzyme]-L-cysteine + N(6)-ubiquitinyl-[acceptor protein]-L-lysine.. Its pathway is protein modification; protein ubiquitination. Its function is as follows. Function on abscisic acid homeostasis at post-translational level, probably through ubiquitin/proteasome-dependent substrate-specific degradation. The protein is Probable E3 ubiquitin-protein ligase XERICO (XERICO) of Arabidopsis thaliana (Mouse-ear cress).